The chain runs to 189 residues: Protein GrpE (189 aa).

The segment covering 1-12 (MDKKKHGSHAGA) has biased composition (basic residues). The segment at 1 to 36 (MDKKKHGSHAGAHHTDEPAAETVAPAAEGAPAAADR) is disordered. The segment covering 20 to 34 (AETVAPAAEGAPAAA) has biased composition (low complexity).

It belongs to the GrpE family. Homodimer.

The protein resides in the cytoplasm. Its function is as follows. Participates actively in the response to hyperosmotic and heat shock by preventing the aggregation of stress-denatured proteins, in association with DnaK and GrpE. It is the nucleotide exchange factor for DnaK and may function as a thermosensor. Unfolded proteins bind initially to DnaJ; upon interaction with the DnaJ-bound protein, DnaK hydrolyzes its bound ATP, resulting in the formation of a stable complex. GrpE releases ADP from DnaK; ATP binding to DnaK triggers the release of the substrate protein, thus completing the reaction cycle. Several rounds of ATP-dependent interactions between DnaJ, DnaK and GrpE are required for fully efficient folding. This chain is Protein GrpE, found in Geobacter metallireducens (strain ATCC 53774 / DSM 7210 / GS-15).